The sequence spans 345 residues: MKALEWMGDSLKILDQTRLPVEIKYRMAATYEEVAEAIEKMEVRGAPAIGAAAAYGYALGAIGYSGELADLPAHMEKVQHRLAETRPTAVNLFWALRRMEDRLRDQHEAKELAEIRQALVAEAENIAEDDRRVNRLIGEHGNAIVTAEANILTHCNAGALATVEYGTALGVIRAAQQAGKKVHVYAGETRPFLQGARLTALELMNDHIPVTLIADNMAGFLMQQGNIDLVIVGADRIAANGDTANKIGTYSLAVLAHAHGIPFYVAAPTSTIDLKVPSGQDIPIEERNPKELREVFGVQVAPPEVPVYNPAFDVTPAKLITGIITEKGIVTSPYSVNLLKMMVRS.

Residues 44-46, Arg86, and Gln194 contribute to the substrate site; that span reads RGA. The Proton donor role is filled by Asp235. 245–246 serves as a coordination point for substrate; it reads NK.

The protein belongs to the eIF-2B alpha/beta/delta subunits family. MtnA subfamily.

It catalyses the reaction 5-(methylsulfanyl)-alpha-D-ribose 1-phosphate = 5-(methylsulfanyl)-D-ribulose 1-phosphate. It functions in the pathway amino-acid biosynthesis; L-methionine biosynthesis via salvage pathway; L-methionine from S-methyl-5-thio-alpha-D-ribose 1-phosphate: step 1/6. Catalyzes the interconversion of methylthioribose-1-phosphate (MTR-1-P) into methylthioribulose-1-phosphate (MTRu-1-P). The polypeptide is Methylthioribose-1-phosphate isomerase (Desulfitobacterium hafniense (strain DSM 10664 / DCB-2)).